A 677-amino-acid polypeptide reads, in one-letter code: Threonine--tRNA ligase (677 aa).

The TGS domain maps to 1–59 (MAQATISITVNGEAKEVEATTTGVELFAEDKNIIAVKINGENRDLYTPLNDGDTVDPIA). The interval 255-561 (DHRKLGAEMD…LLEHYAGAFP (307 aa)) is catalytic. The Zn(2+) site is built by C360, H411, and H538.

Belongs to the class-II aminoacyl-tRNA synthetase family. Homodimer. Requires Zn(2+) as cofactor.

It localises to the cytoplasm. It catalyses the reaction tRNA(Thr) + L-threonine + ATP = L-threonyl-tRNA(Thr) + AMP + diphosphate + H(+). Functionally, catalyzes the attachment of threonine to tRNA(Thr) in a two-step reaction: L-threonine is first activated by ATP to form Thr-AMP and then transferred to the acceptor end of tRNA(Thr). Also edits incorrectly charged L-seryl-tRNA(Thr). The chain is Threonine--tRNA ligase from Bifidobacterium longum (strain DJO10A).